Reading from the N-terminus, the 427-residue chain is Probable transcription factor At5g28040 (427 aa).

The interval 1–81 is disordered; that stretch reads MASDQRDTDF…APATKSSSGT (81 aa). At S14 the chain carries Phosphoserine. The span at 22–32 shows a compositional bias: gly residues; sequence GGGGGGRGGGE. Residues 33–62 show a composition bias toward acidic residues; that stretch reads TESDEDVVIPEPNEAEDDDHDPDPDPEYED.

It belongs to the GeBP family.

This Arabidopsis thaliana (Mouse-ear cress) protein is Probable transcription factor At5g28040.